The chain runs to 457 residues: MTTDEGAKNSRENPTATVAEQGEDVTSKKDRGVLKIVKRVGHGEETPMIGDKVYVHYNGKLSNGKKFDSSHDRNEPFVFSIGKGQVIKAWDIGVATMKKGEICHLLCKPEYAYGATGSLPKIPSNATLFFEIELLDFKGEDLLEDGGIIRRTKRRGEGYSNPNEGARVQIHLEGRCGGRVFDCRDVAFTVGEGEDHDIPIGIDKALEKMQREEQCILHLGPRYGFGEAGKPKFGIEPNAELIYEVTLKSFEKAKESWEMDTKEKLEQAAIVKEKGTLYFKGGKYVQAVIQYGKIVSWLEMEYGLSEKESKASESFLLAAFLNLAMCYLKLREYTKAVECCDKALGLDSANEKGLYRRGEAQLLMNEFESAKGDFEKVLEVNPQNKAARLQIFMCQKKAKEHNERDRRIYANMFKKFAEQDAKEEANKAMSKKTSEGVTNEKLAVSHAVEEEKPEGHV.

An N-acetylmethionine modification is found at M1. Over residues 1 to 11 the composition is skewed to basic and acidic residues; sequence MTTDEGAKNSR. The tract at residues 1 to 27 is disordered; it reads MTTDEGAKNSRENPTATVAEQGEDVTS. K28 carries the post-translational modification N6-acetyllysine. PPIase FKBP-type domains lie at 50-138 and 165-251; these read GDKV…LDFK and GARV…KSFE. TPR repeat units lie at residues 268 to 301, 317 to 350, and 351 to 384; these read AAIV…LEME, LAAF…DSAN, and EKGL…NPQN. Residues 423–457 form a disordered region; the sequence is EEANKAMSKKTSEGVTNEKLAVSHAVEEEKPEGHV. Position 445 is a phosphoserine (S445). The span at 447-457 shows a compositional bias: basic and acidic residues; that stretch reads AVEEEKPEGHV.

As to quaternary structure, part of a heteromultimeric cytoplasmic complex with HSP90AA1, HSPA1A/HSPA1B and steroid receptors. Upon ligand binding dissociates from the complex and FKBP4 takes its place. Interacts with functionally mature heterooligomeric progesterone receptor complexes along with HSP90 and TEBP. Interacts with NR3C1. Interacts with Akt/AKT1 and PHLPP1; enhancing dephosphorylation and subsequent activation of Akt/AKT1. Interacts with IFI44L; this interaction modulates the kinase activity of IKBKB and IKBKE. Interacts with IKBKB and IKBKE. In terms of processing, acetylation impairs ability to promote interaction between Akt/AKT1 and PHLPP1. Deacetylation by SIRT7 promotes interaction between Akt/AKT1 and PHLPP1, leading to suppress Akt/AKT1 activation. Post-translationally, ubiquitinated, leading to degradation in a proteasome-dependent manner. Deubiquitinated by USP49, leading to stabilization.

It localises to the cytoplasm. It is found in the nucleus. The enzyme catalyses [protein]-peptidylproline (omega=180) = [protein]-peptidylproline (omega=0). With respect to regulation, inhibited by both FK506 and rapamycin. In terms of biological role, immunophilin protein with PPIase and co-chaperone activities. Component of unligated steroid receptors heterocomplexes through interaction with heat-shock protein 90 (HSP90). Plays a role in the intracellular trafficking of heterooligomeric forms of steroid hormone receptors maintaining the complex into the cytoplasm when unliganded. Acts as a regulator of Akt/AKT1 activity by promoting the interaction between Akt/AKT1 and PHLPP1, thereby enhancing dephosphorylation and subsequent activation of Akt/AKT1. Interacts with IKBKE and IKBKB which facilitates IKK complex assembly leading to increased IKBKE and IKBKB kinase activity, NF-kappaB activation, and IFN production. This is Peptidyl-prolyl cis-trans isomerase FKBP5 (FKBP5) from Aotus nancymaae (Ma's night monkey).